We begin with the raw amino-acid sequence, 690 residues long: Translation factor GUF1, mitochondrial (690 aa).

Residues 40–68 (SVTVPAARRHNSTKSTNSTTSTNSTTATS) are disordered. A compositionally biased stretch (low complexity) spans 52 to 68 (TKSTNSTTSTNSTTATS). Residues 89–272 (ERYRNFCIVA…AVIKKMPAPV (184 aa)) form the tr-type G domain. GTP contacts are provided by residues 98–105 (AHIDHGKS), 165–169 (DTPGH), and 219–222 (NKID).

This sequence belongs to the TRAFAC class translation factor GTPase superfamily. Classic translation factor GTPase family. LepA subfamily.

It is found in the mitochondrion inner membrane. The enzyme catalyses GTP + H2O = GDP + phosphate + H(+). Its function is as follows. Promotes mitochondrial protein synthesis. May act as a fidelity factor of the translation reaction, by catalyzing a one-codon backward translocation of tRNAs on improperly translocated ribosomes. Binds to mitochondrial ribosomes in a GTP-dependent manner. This chain is Translation factor GUF1, mitochondrial, found in Sordaria macrospora (strain ATCC MYA-333 / DSM 997 / K(L3346) / K-hell).